Reading from the N-terminus, the 127-residue chain is Aspartate 1-decarboxylase (127 aa).

The Schiff-base intermediate with substrate; via pyruvic acid role is filled by Ser25. Ser25 carries the post-translational modification Pyruvic acid (Ser). Substrate is bound at residue Thr57. Tyr58 (proton donor) is an active-site residue. 73–75 (GAA) contributes to the substrate binding site.

It belongs to the PanD family. In terms of assembly, heterooctamer of four alpha and four beta subunits. Pyruvate is required as a cofactor. In terms of processing, is synthesized initially as an inactive proenzyme, which is activated by self-cleavage at a specific serine bond to produce a beta-subunit with a hydroxyl group at its C-terminus and an alpha-subunit with a pyruvoyl group at its N-terminus.

The protein resides in the cytoplasm. It carries out the reaction L-aspartate + H(+) = beta-alanine + CO2. Its pathway is cofactor biosynthesis; (R)-pantothenate biosynthesis; beta-alanine from L-aspartate: step 1/1. Catalyzes the pyruvoyl-dependent decarboxylation of aspartate to produce beta-alanine. This is Aspartate 1-decarboxylase from Clostridium acetobutylicum (strain ATCC 824 / DSM 792 / JCM 1419 / IAM 19013 / LMG 5710 / NBRC 13948 / NRRL B-527 / VKM B-1787 / 2291 / W).